We begin with the raw amino-acid sequence, 911 residues long: Chromatin assembly factor 1 subunit A (911 aa).

The segment at 1 to 31 (MLEEPEAATRTAAAVDCKDRPGFPVKRLIQA) is binds PCNA. The tract at residues 166–200 (HMEEEPGSPGDPKRTGDCQAGSLQSCPELTPGSRT) is disordered. The interval 176-327 (DPKRTGDCQA…LHRDREQQRE (152 aa)) is binds CBX1 and CBX3 chromo shadow domains. The segment covering 186-200 (GSLQSCPELTPGSRT) has biased composition (polar residues). Phosphoserine is present on residues S190 and S208. Positions 217 to 230 (FIEKVPVVVLEDIL) match the PxVxL motif motif. Disordered regions lie at residues 250 to 408 (SESE…EEEK) and 578 to 618 (DSDD…VPHG). The span at 265-281 (LSHSSTNSSSPTSSPEG) shows a compositional bias: low complexity. At S293 the chain carries Phosphoserine. The segment covering 310-408 (STEKGRSKLH…EEKRLREEEK (99 aa)) has biased composition (basic and acidic residues). Composition is skewed to acidic residues over residues 578–589 (DSDDEWEEEEPG) and 597–612 (GDED…EDDG). Residues 621-657 (SEDEGVTEECADPENHKVHQKLKAKEWDELLAKGKRF) are necessary for homodimerization and competence for chromatin assembly. Positions 639–911 (HQKLKAKEWD…APIPAPTLCK (273 aa)) are binds to p60. S776 carries the phosphoserine modification. 2 disordered regions span residues 819–843 (PSAP…MLLK) and 866–886 (GSGD…DDTD). The span at 827–839 (GSASTEGPGQSTP) shows a compositional bias: polar residues. The residue at position 838 (T838) is a Phosphothreonine. The segment covering 876–886 (DTEEDEEDDTD) has biased composition (acidic residues).

It belongs to the CHAF1A family. Homodimer. Part of the CAF-1 complex that contains RBBP4, CHAF1B and CHAF1A. CHAF1A binds directly to CHAF1B. Only minor amounts of RBBP4 are complexed with CHAF1A and CHAF1B in G1 phase. Interacts with PCNA; the interaction is direct. Interacts (via the PxVxL motif) with CBX5; the interaction is direct. Interacts with MBD1. Interacts with histones H3.1, H3.2 and H3.1t.

The protein localises to the nucleus. In terms of biological role, acts as a component of the histone chaperone complex chromatin assembly factor 1 (CAF-1), which assembles histone octamers onto DNA during replication and repair. CAF-1 performs the first step of the nucleosome assembly process, bringing newly synthesized histones H3 and H4 to replicating DNA; histones H2A/H2B can bind to this chromatin precursor subsequent to DNA replication to complete the histone octamer. It may play a role in heterochromatin maintenance in proliferating cells by bringing newly synthesized cbx proteins to heterochromatic DNA replication foci. The sequence is that of Chromatin assembly factor 1 subunit A from Mus musculus (Mouse).